The following is a 506-amino-acid chain: Kynurenine 3-monooxygenase (506 aa).

Residues 153–175 (QETSLLPGEESEKDKKQNTEDED) are disordered. Residues 162 to 171 (ESEKDKKQNT) show a composition bias toward basic and acidic residues.

The protein belongs to the aromatic-ring hydroxylase family. KMO subfamily. FAD serves as cofactor.

It is found in the mitochondrion outer membrane. It carries out the reaction L-kynurenine + NADPH + O2 + H(+) = 3-hydroxy-L-kynurenine + NADP(+) + H2O. The protein operates within cofactor biosynthesis; NAD(+) biosynthesis; quinolinate from L-kynurenine: step 1/3. Its function is as follows. Catalyzes the hydroxylation of L-kynurenine (L-Kyn) to form 3-hydroxy-L-kynurenine (L-3OHKyn). Required for synthesis of quinolinic acid. The polypeptide is Kynurenine 3-monooxygenase (Cryptococcus neoformans var. neoformans serotype D (strain B-3501A) (Filobasidiella neoformans)).